The sequence spans 600 residues: Melanophilin (600 aa).

Residues 4-124 (KLDLSKLTDE…IGSLEWYYEH (121 aa)) form the RabBD domain. The FYVE-type zinc-finger motif lies at 64-107 (CARCLQPYQLLVNSKRQCLECGLFTCKSCGRVHPEEQGWICDPC). Disordered stretches follow at residues 146 to 277 (QGGA…AELC), 390 to 465 (EELT…LSEL), 499 to 541 (TVKP…AKAM), and 553 to 600 (NSLK…AHQS). Composition is skewed to basic and acidic residues over residues 232 to 243 (CSEKAAPHKAEG) and 409 to 420 (KDEKAEPNRDKS). The stretch at 373-496 (GVRTEADVEE…ESRIAALRAA (124 aa)) forms a coiled coil. A compositionally biased stretch (basic and acidic residues) spans 558-569 (QGKDDDSFDRKS).

In terms of assembly, binds RAB27A that has been activated by GTP-binding via its N-terminus. Binds MYO5A via its C-terminal coiled coil domain.

Its subcellular location is the cytoplasm. Rab effector protein involved in melanosome transport. Serves as link between melanosome-bound RAB27A and the motor protein MYO5A. In Homo sapiens (Human), this protein is Melanophilin (MLPH).